The following is a 453-amino-acid chain: uncharacterized protein (453 aa).

Disordered regions lie at residues 140–161 (YGES…TRPQ) and 311–332 (TTTR…SASS).

This is an uncharacterized protein from Caenorhabditis elegans.